Reading from the N-terminus, the 320-residue chain is MLNTTSVTEFLLLGVTDIQELQPFLFVVFLTIYFISVAGNGAILMIVISDPRLHSPMYFFLGNLSCLDICYSSVTLPKMLQNFLSAHKAISFLGCISQLHFFHFLGSTEAMLLAVMAFDRFVAICKPLRYTVIMNPQLCTQMAITIWMIGFFHALLHSLMTSRLNFCGSNRIYHFFCDVKPLLKLACGNTELNQWLLSTVTGTIAMGPFFLTLLSYFYIITHLFFKTHSFSMLRKALSTCASHFMVVILLYAPVLFTYIHHASGTSMDQDRITAIMYTVVTPVLNPLIYTLRNKEVKGAFNRAMKRWLWPKEILKNSSEA.

Residues 1-23 are Extracellular-facing; that stretch reads MLNTTSVTEFLLLGVTDIQELQP. The N-linked (GlcNAc...) asparagine glycan is linked to Asn-3. Residues 24–44 traverse the membrane as a helical segment; sequence FLFVVFLTIYFISVAGNGAIL. Residues 45–55 lie on the Cytoplasmic side of the membrane; it reads MIVISDPRLHS. A helical transmembrane segment spans residues 56–76; sequence PMYFFLGNLSCLDICYSSVTL. Topologically, residues 77–97 are extracellular; the sequence is PKMLQNFLSAHKAISFLGCIS. An intrachain disulfide couples Cys-95 to Cys-177. A helical transmembrane segment spans residues 98 to 118; sequence QLHFFHFLGSTEAMLLAVMAF. At 119-141 the chain is on the cytoplasmic side; the sequence is DRFVAICKPLRYTVIMNPQLCTQ. A helical membrane pass occupies residues 142–162; sequence MAITIWMIGFFHALLHSLMTS. Residues 163-203 are Extracellular-facing; the sequence is RLNFCGSNRIYHFFCDVKPLLKLACGNTELNQWLLSTVTGT. Residues 204 to 224 traverse the membrane as a helical segment; the sequence is IAMGPFFLTLLSYFYIITHLF. Residues 225–238 are Cytoplasmic-facing; sequence FKTHSFSMLRKALS. The helical transmembrane segment at 239–259 threads the bilayer; the sequence is TCASHFMVVILLYAPVLFTYI. Topologically, residues 260-270 are extracellular; it reads HHASGTSMDQD. Residues 271–291 form a helical membrane-spanning segment; sequence RITAIMYTVVTPVLNPLIYTL. Residues 292–320 lie on the Cytoplasmic side of the membrane; the sequence is RNKEVKGAFNRAMKRWLWPKEILKNSSEA.

It belongs to the G-protein coupled receptor 1 family.

Its subcellular location is the cell membrane. Functionally, odorant receptor. The sequence is that of Olfactory receptor 12D1 (OR12D1) from Homo sapiens (Human).